A 1006-amino-acid polypeptide reads, in one-letter code: MKLLSVCAIALLAAQAAGASIKHMLNGFTLMEHSDPAKRELLQKYVTWDEKSLFVNGERIMIFSGEVHPFRLPVPSLWLDVFQKIKALGFNCVSFYVDWALLEGKPGEYRAEGNFALEPFFDVAKQAGIYLLARPGPYINAEASGGGFPGWLQRVNGTLRTSDPAYLKATDNYIAHVAATIAKGQITNGGPVILYQPENEYSGACCDATFPDGDYMQYVIDQARNAGIVVPLINNDAWTGGHNAPGTGKGEVDIYGHDSYPLGFDCGHPSVWPKGNLPTTFRTDHLKQSPTTPYSLIEFQAGSFDPWGGPGFAACAALVNHEFERVFYKNDLSFGAAILNLYMTFGGTNWGNLGHPGGYTSYDYGSPLTESRNVTREKYSELKLIGNFVKASPSYLLATPGNLTTSGYADTADLTVTPLLGNGTGSYFVVRHTDYTSQASTPYKLSLPTSAGRLTVPQLGGTLTLNGRDSKIHVVDYNVAGTNIIYSTAEVFTWKNFGDSKVLILYGGPGEHHELAVSFKSDVQVVEGSNSEFKSKKVGDVAVVAWDVSPSRRIVQIGDLKIFLLDRNSVYNYWVPQLDKDDSSTGYSSEKTTASSIIVKAGYLVRTAYTKGSGLYLTADFNATTPVEVIGAPSNVRNLYINGEKTQFKTDKNGIWSTEVKYSAPKIKLPSMKDLDWKYLDTLQEVQSTYDDSAWPAADLDTTPNTLRPLTTPKSLYSSDYGFHTGYLIYRGHFVADGSETTFDVRTQGGSAFGSSVWLNESFLGSWTGLNANADYNSTYKLPQVEQGKNYVLTILIDTMGLNENWVVGTDEMKNPRGILSYKLSGRDASAITWKLTGNLGGEDYQDKIRGPLNEGGLYAERQGFHQPQPPSQKWKSASPLDGLSKPGIGFYTAQFDLDIPSGWDVPLYFNFGNSTKSAYRVQLYVNGYQYGKFVSNIGPQTSFPVPQGILNYQGTNWVALTLWALESDGAKLDDFELVNTTPVMTALSKIRPSKQPNYRQRKGAY.

A signal peptide spans 1–18; the sequence is MKLLSVCAIALLAAQAAG. Substrate-binding residues include tyrosine 96, asparagine 140, alanine 141, and glutamate 142. Asparagine 156 carries an N-linked (GlcNAc...) asparagine glycan. Asparagine 199 contacts substrate. Glutamate 200 acts as the Proton donor in catalysis. Cysteine 205 and cysteine 206 are oxidised to a cystine. Tyrosine 260 serves as a coordination point for substrate. A disulfide bridge links cysteine 266 with cysteine 315. The active-site Nucleophile is the glutamate 298. Tyrosine 364 contacts substrate. N-linked (GlcNAc...) asparagine glycans are attached at residues asparagine 373, asparagine 402, asparagine 422, asparagine 622, asparagine 760, asparagine 777, and asparagine 914.

The protein belongs to the glycosyl hydrolase 35 family.

It localises to the secreted. The catalysed reaction is Hydrolysis of terminal non-reducing beta-D-galactose residues in beta-D-galactosides.. Its function is as follows. Cleaves beta-linked terminal galactosyl residues from gangliosides, glycoproteins, and glycosaminoglycans. This is Probable beta-galactosidase A (lacA) from Aspergillus fumigatus (strain CBS 144.89 / FGSC A1163 / CEA10) (Neosartorya fumigata).